Consider the following 427-residue polypeptide: MELNIKMDRSRELFEESRKYLVGGVNSPVRSFKPFPFFVKSAKDCFLYDEDGNEFIDYCLAYGPMVLGHANENILNAVKSQMDLGTAYGVPSEKEIILAKEVINRIPCAEMVRFVNSGTEATMGAIRLARGVTKRNKIIKFEGAFHGAHDYVLVKTGSGALTHGAPNSPGIPEDTTKNTLLIPFNDEDAVKKVISENKDEIACIILEPVMGNVGCILPKDGYLQFLREITEENGIILIFDEVITGFRLSKGGAQEYYGIKSDLATVGKILGGGFPIGAITGKKEYMEQFSPNGQIYQAGTFNGNPVSVTAGIETLKNLDDKFYKETTKKADILSSFLRETAEKYNVPAKVYNVASIFQIYFNDKEIVTYEDAKSSDTEKFMRYFYTLLENGVFIAPSQFECCFTSIKHNDEVLEKTMNAIDIAMKKL.

Position 268 is an N6-(pyridoxal phosphate)lysine (K268).

It belongs to the class-III pyridoxal-phosphate-dependent aminotransferase family. HemL subfamily. Pyridoxal 5'-phosphate serves as cofactor.

It is found in the cytoplasm. It catalyses the reaction (S)-4-amino-5-oxopentanoate = 5-aminolevulinate. Its pathway is porphyrin-containing compound metabolism; protoporphyrin-IX biosynthesis; 5-aminolevulinate from L-glutamyl-tRNA(Glu): step 2/2. The sequence is that of Glutamate-1-semialdehyde 2,1-aminomutase from Methanococcus maripaludis (strain C7 / ATCC BAA-1331).